The following is a 472-amino-acid chain: Ras-GEF domain-containing family member 1B (472 aa).

The N-terminal Ras-GEF domain maps to 34–164 (HDNNLLSGSL…MMQCLIRKLA (131 aa)). The Ras-GEF domain maps to 204 to 452 (DPYTLAQQLT…YLASYESEGP (249 aa)).

In terms of assembly, interacts with CCDC124 during cytokinesis. Interacts with Ras family proteins.

The protein resides in the early endosome. Its subcellular location is the late endosome. The protein localises to the midbody. Its function is as follows. Guanine nucleotide exchange factor (GEF) with specificity for RAP2A, it doesn't seems to activate other Ras family proteins (in vitro). This is Ras-GEF domain-containing family member 1B (RASGEF1B) from Pongo abelii (Sumatran orangutan).